We begin with the raw amino-acid sequence, 498 residues long: Calcium-dependent protein kinase 22 (498 aa).

G2 carries the N-myristoyl glycine lipid modification. One can recognise a Protein kinase domain in the interval 36–305; that stretch reads YSFGDELGKG…AADVLEHPWM (270 aa). ATP is bound by residues 42–50 and K65; that span reads LGKGNFGTT. D164 functions as the Proton acceptor in the catalytic mechanism. S204 bears the Phosphoserine mark. Residues 309–339 are autoinhibitory domain; it reads APDKPIDNVVLSRMKQFRAMNKLKKLALKVI. EF-hand domains lie at 346–381, 382–417, 418–453, and 454–488; these read EEIK…HGSK, LSET…RHRL, ERDE…HGMG, and DEAN…GILQ. The Ca(2+) site is built by D359, D361, S363, S365, E370, D395, D397, N399, T401, E406, D431, D433, S435, H437, E442, D466, N468, D470, K472, and E477.

This sequence belongs to the protein kinase superfamily. Ser/Thr protein kinase family. CDPK subfamily.

It localises to the membrane. The catalysed reaction is L-seryl-[protein] + ATP = O-phospho-L-seryl-[protein] + ADP + H(+). It carries out the reaction L-threonyl-[protein] + ATP = O-phospho-L-threonyl-[protein] + ADP + H(+). With respect to regulation, activated by calcium. Autophosphorylation may play an important role in the regulation of the kinase activity. In terms of biological role, may play a role in signal transduction pathways that involve calcium as a second messenger. This Arabidopsis thaliana (Mouse-ear cress) protein is Calcium-dependent protein kinase 22 (CPK22).